We begin with the raw amino-acid sequence, 465 residues long: MDNTSSVPWASAASVTCLSLDAKCHSSSAKSAASSISASPETQAMRHIAHTQRCLSRLTSLVALLLIVLPMTFSPAHSCGPGRGLGRHRARNLYPLVLKQTIPNLSEYTNSASGPLEGVIRRDSPKFKDLVPNYNRDILFRDEEGTGADRLMSKRCREKLNLLAYSVMNEWPGIRLLVTESWDEDYHHGQESLHYEGRAVTIATSDRDQSKYGMLARLAVEAGFDWVSYVSRRHIYCSVKSDSSISSHVHGCFTPESTALLENGVRKPLGELSIGDRVLSMTANGQAVYSEVILFMDRNLEQMQNFVQLHTDGEAVLTVTPAHLVSVWQAESQKLTFVFADRVEEKNQVLVRDVETGELRPQRVVKVGSVRSKGVVAPLTREGTIVVNSVAASCYAVINSQSLAHWGLAPMRLLSTLEAWLPAKEQLHSSPKVVTTAEQQNGIHWYANALYKVKDYVLPQSWRHD.

A lipid anchor (N-palmitoyl cysteine) is attached at Cys79. Residues Glu143, Glu144, Asp149, Thr179, Glu180, Asp183, and Asp185 each contribute to the Ca(2+) site. Gly251 is lipidated: Cholesterol glycine ester.

It belongs to the hedgehog family. In terms of assembly, interacts with shf. The C-terminal part of the hedgehog protein precursor displays an autoproteolysis activity that results in the cleavage of the full-length protein into two parts (N-product and C-product). In addition, the C-terminal part displays a cholesterol transferase activity that results by the covalent attachment of a cholesterol moiety to the C-terminal of the newly generated N-product. The N-product is the active species in both local and long-range signaling, whereas the C-product has no signaling activity. In terms of processing, cholesterylation is required for N-product targeting to lipid rafts and multimerization. Post-translationally, N-palmitoylation by Rasp of the hedgehog N-product, within the secretory pathway, is required for the embryonic and larval patterning activities of the hedgehog signal.

Its subcellular location is the nucleus. It localises to the cytoplasm. The protein localises to the cell membrane. It carries out the reaction glycyl-L-cysteinyl-[protein] + cholesterol + H(+) = [protein]-C-terminal glycyl cholesterol ester + N-terminal L-cysteinyl-[protein]. Its function is as follows. The C-terminal part of the hedgehog protein precursor displays an autoproteolysis activity that results in the cleavage of the full-length protein into two parts (N-product and C-product). In addition, the C-terminal part displays a cholesterol transferase activity that results by the covalent attachment of a cholesterol moiety to the C-terminal of the newly generated N-product. Once cleaved, the C-product has no signaling activity and diffuses from the cell. Functionally, the dually lipidated hedgehog protein N-product is a morphogen which is essential for a variety of patterning events during development. Establishes the anterior-posterior axis of the embryonic segments and patterns the larval imaginal disks. Binds to the patched (ptc) receptor, which functions in association with smoothened (smo), to activate the transcription of target genes wingless (wg), decapentaplegic (dpp) and ptc. In the absence of hh, ptc represses the constitutive signaling activity of smo through fused (fu). Essential component of a signaling pathway which regulates the Duox-dependent gut immune response to bacterial uracil; required to activate Cad99C-dependent endosome formation, norpA-dependent Ca2+ mobilization and p38 MAPK, which are essential steps in the Duox-dependent production of reactive oxygen species (ROS) in response to intestinal bacterial infection. During photoreceptor differentiation, it up-regulates transcription of Ubr3, which in turn promotes the hh-signaling pathway by mediating the ubiquitination and degradation of cos. The sequence is that of Protein hedgehog from Drosophila erecta (Fruit fly).